Reading from the N-terminus, the 240-residue chain is Tetraspanin-1 (240 aa).

Residues 1–9 (MQCFSFIKT) are Cytoplasmic-facing. A helical membrane pass occupies residues 10 to 30 (IMILFNLLIFLCGAALLAVGI). The Extracellular segment spans residues 31–52 (WVSIDGASFLKIFGPLSSSAMQ). Residues 53–73 (FVNVGYFLIAAGAVVFALGFL) form a helical membrane-spanning segment. Residues 74 to 88 (GCYGAQTESKCALMT) lie on the Cytoplasmic side of the membrane. Residues 89 to 109 (FFFILLLIFIAEVAAAVVALV) form a helical membrane-spanning segment. The Extracellular portion of the chain corresponds to 110–210 (YTTMAEHFLT…QQLLYDIRTN (101 aa)). A glycan (N-linked (GlcNAc...) asparagine) is linked at Asn154. A helical transmembrane segment spans residues 211–231 (AVTVGGVAAGIGGLELAAMIV). Topologically, residues 232–240 (SMYLYCNLQ) are cytoplasmic.

Belongs to the tetraspanin (TM4SF) family. As to quaternary structure, interacts with SLC19A2. Interacts with NTRK1/TRKA.

It localises to the lysosome membrane. Structural component of specialized membrane microdomains known as tetraspanin-enriched microdomains (TERMs), which act as platforms for receptor clustering and signaling. Participates thereby in diverse biological functions such as cell signal transduction, adhesion, migration and protein trafficking. Regulates neuronal differentiation in response to NGF by facilitating NGF-mediated activation of NTRK1/TRKA receptor tyrosine kinase and subsequent downstream signaling pathways. Plays a role in the inhibition of TNFalpha-induced apoptosis. Mechanistically, inhibits the NF-kappa-B signaling pathway by blocking phosphorylation of CHUK. Also promotes the stability of the thiamine transporter 1/SLC19A2 in intestinal epithelial cells leading to an increase of thiamine uptake process. The polypeptide is Tetraspanin-1 (TSPAN1) (Macaca fascicularis (Crab-eating macaque)).